A 190-amino-acid chain; its full sequence is Threonylcarbamoyl-AMP synthase (190 aa).

The 184-residue stretch at 7–190 folds into the YrdC-like domain; it reads GDAIAAAIDV…ALTGELFRQG (184 aa).

It belongs to the SUA5 family. TsaC subfamily.

The protein resides in the cytoplasm. It catalyses the reaction L-threonine + hydrogencarbonate + ATP = L-threonylcarbamoyladenylate + diphosphate + H2O. In terms of biological role, required for the formation of a threonylcarbamoyl group on adenosine at position 37 (t(6)A37) in tRNAs that read codons beginning with adenine. Catalyzes the conversion of L-threonine, HCO(3)(-)/CO(2) and ATP to give threonylcarbamoyl-AMP (TC-AMP) as the acyladenylate intermediate, with the release of diphosphate. In Escherichia coli O6:H1 (strain CFT073 / ATCC 700928 / UPEC), this protein is Threonylcarbamoyl-AMP synthase.